A 278-amino-acid polypeptide reads, in one-letter code: Shikimate dehydrogenase (NADP(+)) (278 aa).

Shikimate-binding positions include 15 to 17 (SMS) and Thr62. The Proton acceptor role is filled by Lys66. Glu78 is an NADP(+) binding site. Residues Asn87 and Asp102 each coordinate shikimate. NADP(+) contacts are provided by residues 127 to 131 (GAGGA), 151 to 156 (NRTPEK), and Ile217. Shikimate is bound at residue Tyr219. Gly240 contacts NADP(+).

Belongs to the shikimate dehydrogenase family. Homodimer.

It catalyses the reaction shikimate + NADP(+) = 3-dehydroshikimate + NADPH + H(+). It participates in metabolic intermediate biosynthesis; chorismate biosynthesis; chorismate from D-erythrose 4-phosphate and phosphoenolpyruvate: step 4/7. In terms of biological role, involved in the biosynthesis of the chorismate, which leads to the biosynthesis of aromatic amino acids. Catalyzes the reversible NADPH linked reduction of 3-dehydroshikimate (DHSA) to yield shikimate (SA). The polypeptide is Shikimate dehydrogenase (NADP(+)) (Bacillus licheniformis (strain ATCC 14580 / DSM 13 / JCM 2505 / CCUG 7422 / NBRC 12200 / NCIMB 9375 / NCTC 10341 / NRRL NRS-1264 / Gibson 46)).